A 31-amino-acid polypeptide reads, in one-letter code: MTIAIDYFLLVGFCFAFTSGLYLGLKSIKLI.

The helical transmembrane segment at 3-23 threads the bilayer; sequence IAIDYFLLVGFCFAFTSGLYL.

The protein belongs to the PetL family. As to quaternary structure, the 4 large subunits of the cytochrome b6-f complex are cytochrome b6, subunit IV (17 kDa polypeptide, PetD), cytochrome f and the Rieske protein, while the 4 small subunits are PetG, PetL, PetM and PetN. The complex functions as a dimer.

The protein resides in the plastid. The protein localises to the chloroplast thylakoid membrane. Its function is as follows. Component of the cytochrome b6-f complex, which mediates electron transfer between photosystem II (PSII) and photosystem I (PSI), cyclic electron flow around PSI, and state transitions. PetL is important for photoautotrophic growth as well as for electron transfer efficiency and stability of the cytochrome b6-f complex. This Trieres chinensis (Marine centric diatom) protein is Cytochrome b6-f complex subunit 6.